Here is a 96-residue protein sequence, read N- to C-terminus: RNA-binding protein Hfq (96 aa).

The 60-residue stretch at 9–68 folds into the Sm domain; it reads DPYLNALRRERIPVSIYLVNGIKLQGQIESFDQFVILLKNTVNQMVYKHAISTVVPARSV. Positions 65–96 are disordered; sequence ARSVSHHNNPQQQQQHSQQTESAAPAAEPQAE. Residues 70–96 show a composition bias toward low complexity; that stretch reads HHNNPQQQQQHSQQTESAAPAAEPQAE.

Belongs to the Hfq family. Homohexamer.

Its function is as follows. RNA chaperone that binds small regulatory RNA (sRNAs) and mRNAs to facilitate mRNA translational regulation in response to envelope stress, environmental stress and changes in metabolite concentrations. Also binds with high specificity to tRNAs. This Mannheimia succiniciproducens (strain KCTC 0769BP / MBEL55E) protein is RNA-binding protein Hfq.